The chain runs to 410 residues: Voltage-dependent chloride channel 2, chloroplastic (410 aa).

The Lumenal, thylakoid segment spans residues 1-110 (MYQSMNLSFS…RHVSSSPSSR (110 aa)). A helical transmembrane segment spans residues 111 to 131 (VILSLIPPVFFFTTVAILIAG). Residues 132-147 (YNSAVDLDWLPDFFPV) are Stromal-facing. A helical membrane pass occupies residues 148 to 168 (LRASPLPYQLTAPALALLLVF). The Lumenal, thylakoid portion of the chain corresponds to 169–315 (RTEASYSRFE…PLSYTRLTSR (147 aa)). Helical transmembrane passes span 316-336 (FLVLWHLTLPVILWDDCHWNV) and 337-357 (VPATFISAASLFCIEEVGVLI). Over 358–410 (EEPFSMLALDELCAMVLSNSDEAVESKEVIRNRIIAKKRILEIKHSSNGWHKS) the chain is Lumenal, thylakoid.

The protein belongs to the anion channel-forming bestrophin (TC 1.A.46) family. Voltage-dependent chloride channel subfamily. In terms of tissue distribution, mostly expressed in flowers and, to a lower extent, in leaves, stems and roots.

The protein localises to the plastid. It is found in the chloroplast thylakoid membrane. It catalyses the reaction chloride(in) = chloride(out). In terms of biological role, voltage-dependent chloride (Cl) channel probably contributing to proton motive force (PMF) partitioning across the thylakoid membrane by anion influx into the lumen. Influences thylakoid ultrastructure, including lumen size and organization. In Arabidopsis thaliana (Mouse-ear cress), this protein is Voltage-dependent chloride channel 2, chloroplastic.